A 253-amino-acid chain; its full sequence is rRNA adenine N-6-methyltransferase (253 aa).

Residues N14, L16, G40, E61, D85, and N101 each coordinate S-adenosyl-L-methionine. The interval 229 to 253 (CAREESTPRPYLPDCTPTTGSISSR) is disordered. The segment covering 244–253 (TPTTGSISSR) has biased composition (polar residues).

It belongs to the class I-like SAM-binding methyltransferase superfamily. rRNA adenine N(6)-methyltransferase family.

Involved in erythromycin resistance. The chain is rRNA adenine N-6-methyltransferase (ermA) from Corynebacterium diphtheriae.